The sequence spans 504 residues: MQQSTPYLSFRGIGKTFPGVKALTDISFDCYAGQVHALMGENGAGKSTLLKILSGNYAPTTGSVVINGQEMSFSDTTAALNAGVAIIYQELHLVPEMTVAENIYLGQLPHKGGIVNRSLLNYEAGLQLKHLGMDIDPDTPLKYLSIGQWQMVEIAKALARNAKIIAFDEPTSSLSAREIDNLFRVIRELRKEGRVILYVSHRMEEIFALSDAITVFKDGRYVRTFTDMQQVDHDALVQAMVGRDIGDIYGWQPRSYGEERLRLDAVKAPGVRTPISLAVRSGEIVGLFGLVGAGRSELMKGMFGGTQITAGQVYIDQQPIDIRKPSHAIAAGMMLCPEDRKAEGIIPVHSVRDNINISARRKHVLGGCVINNGWEENNADHHIRSLNIKTPGAEQLIMNLSGGNQQKAILGRWLSEEMKVILLDEPTRGIDVGAKHEIYNVIYALAAQGVAVLFASSDLPEVLGVADRIVVMREGEIAGELLHEQADERQALSLAMPKVSQAVA.

2 ABC transporter domains span residues 8–243 and 256–499; these read LSFR…MVGR and YGEE…MPKV. ATP is bound at residue 40 to 47; it reads GENGAGKS.

Belongs to the ABC transporter superfamily. Arabinose importer (TC 3.A.1.2.2) family. The complex is composed of two ATP-binding proteins (AraG), two transmembrane proteins (AraH) and a solute-binding protein (AraF).

It localises to the cell inner membrane. It catalyses the reaction L-arabinose(out) + ATP + H2O = L-arabinose(in) + ADP + phosphate + H(+). In terms of biological role, part of the ABC transporter complex AraFGH involved in arabinose import. Responsible for energy coupling to the transport system. In Shigella dysenteriae serotype 1 (strain Sd197), this protein is Arabinose import ATP-binding protein AraG.